A 341-amino-acid chain; its full sequence is GTPase Obg (341 aa).

The region spanning 2–160 is the Obg domain; the sequence is SGFIDEVPIQ…FSLILELKLL (159 aa). An OBG-type G domain is found at 161-330; it reads ADIGIVGLPN…LLERIDKVFF (170 aa). GTP contacts are provided by residues 167–174, 192–196, 215–218, 282–285, and 311–313; these read GLPNAGKS, FTTLS, DIPG, NKMD, and SAD. Mg(2+)-binding residues include Ser-174 and Thr-194.

This sequence belongs to the TRAFAC class OBG-HflX-like GTPase superfamily. OBG GTPase family. As to quaternary structure, monomer. The cofactor is Mg(2+).

The protein localises to the cytoplasm. Functionally, an essential GTPase which binds GTP, GDP and possibly (p)ppGpp with moderate affinity, with high nucleotide exchange rates and a fairly low GTP hydrolysis rate. Plays a role in control of the cell cycle, stress response, ribosome biogenesis and in those bacteria that undergo differentiation, in morphogenesis control. This is GTPase Obg from Leptospira biflexa serovar Patoc (strain Patoc 1 / Ames).